A 233-amino-acid polypeptide reads, in one-letter code: Histone H1-I (233 aa).

Disordered regions lie at residues 1-55 (MSDS…HPPV) and 115-233 (TGAS…KKSK). The span at 17–29 (KAATPAKSPAKSP) shows a compositional bias: low complexity. In terms of domain architecture, H15 spans 51–125 (THPPVSEMVV…GASGSFKMPP (75 aa)). 2 stretches are compositionally biased toward basic and acidic residues: residues 128-137 (KKVDKPEAAP) and 144-155 (PKREIEKKEKKV). 3 stretches are compositionally biased toward basic residues: residues 172 to 186 (AAKK…KKAA), 199 to 213 (SPKK…KPTP), and 223 to 233 (AAAKKPAKKSK).

It belongs to the histone H1/H5 family.

It localises to the nucleus. The protein resides in the chromosome. Functionally, histones H1 are necessary for the condensation of nucleosome chains into higher-order structures. The sequence is that of Histone H1-I from Glyptotendipes salinus (Midge).